Here is a 748-residue protein sequence, read N- to C-terminus: Catalase-peroxidase (748 aa).

Positions Met1–Ala14 are enriched in basic and acidic residues. Positions Met1–Asn40 are disordered. Positions Trp112 to Tyr239 form a cross-link, tryptophyl-tyrosyl-methioninium (Trp-Tyr) (with M-265). The active-site Proton acceptor is the His113. Residues Tyr239–Met265 constitute a cross-link (tryptophyl-tyrosyl-methioninium (Tyr-Met) (with W-112)). A heme b-binding site is contributed by His280.

It belongs to the peroxidase family. Peroxidase/catalase subfamily. In terms of assembly, homodimer or homotetramer. Heme b is required as a cofactor. In terms of processing, formation of the three residue Trp-Tyr-Met cross-link is important for the catalase, but not the peroxidase activity of the enzyme.

It catalyses the reaction H2O2 + AH2 = A + 2 H2O. The enzyme catalyses 2 H2O2 = O2 + 2 H2O. Bifunctional enzyme with both catalase and broad-spectrum peroxidase activity. The sequence is that of Catalase-peroxidase from Mycolicibacterium gilvum (strain PYR-GCK) (Mycobacterium gilvum (strain PYR-GCK)).